The following is a 189-amino-acid chain: Thymidine kinase (189 aa).

Residues 9-16 and 85-88 contribute to the ATP site; these read GTMNSGKS and DEAQ. Residue E86 is the Proton acceptor of the active site. Positions 143, 146, 180, and 183 each coordinate Zn(2+).

This sequence belongs to the thymidine kinase family. Homotetramer.

It localises to the cytoplasm. It catalyses the reaction thymidine + ATP = dTMP + ADP + H(+). The chain is Thymidine kinase from Lactococcus lactis subsp. lactis (strain IL1403) (Streptococcus lactis).